A 513-amino-acid chain; its full sequence is Mannan endo-1,4-beta-mannosidase A and B (513 aa).

The N-terminal stretch at 1–26 (MKVYKKVAFVMAFIMFFSVLPTISMS) is a signal peptide. The 313-residue stretch at 41-353 (QTTKNVYSWL…FNDSWVVNRG (313 aa)) folds into the GH26 domain. His132 contributes to the substrate binding site. The active-site Proton donor is Glu195. Residues Trp200 and Tyr270 each contribute to the substrate site. The active-site Nucleophile is Glu295. 429 to 430 (IK) serves as a coordination point for substrate.

It belongs to the glycosyl hydrolase 26 family.

Its subcellular location is the secreted. The enzyme catalyses Random hydrolysis of (1-&gt;4)-beta-D-mannosidic linkages in mannans, galactomannans and glucomannans.. In terms of biological role, could be involved in the degradation of glucomannan and catalyzes the endo hydrolysis of beta-1,4-linked mannan, galactomannan and glucomannan. This chain is Mannan endo-1,4-beta-mannosidase A and B, found in Caldalkalibacillus mannanilyticus (strain DSM 16130 / CIP 109019 / JCM 10596 / AM-001) (Bacillus mannanilyticus).